Consider the following 314-residue polypeptide: tRNA dimethylallyltransferase (314 aa).

14–21 (GPTASGKT) contacts ATP. Residue 16 to 21 (TASGKT) participates in substrate binding. 3 interaction with substrate tRNA regions span residues 39–42 (DSAQ), 163–167 (QRLQR), and 245–250 (RCVGYR).

Belongs to the IPP transferase family. As to quaternary structure, monomer. Mg(2+) serves as cofactor.

The catalysed reaction is adenosine(37) in tRNA + dimethylallyl diphosphate = N(6)-dimethylallyladenosine(37) in tRNA + diphosphate. In terms of biological role, catalyzes the transfer of a dimethylallyl group onto the adenine at position 37 in tRNAs that read codons beginning with uridine, leading to the formation of N6-(dimethylallyl)adenosine (i(6)A). This is tRNA dimethylallyltransferase from Dechloromonas aromatica (strain RCB).